We begin with the raw amino-acid sequence, 341 residues long: Short chain dehydrogenase virL (341 aa).

Positions 49, 74, 97, 123, 210, and 214 each coordinate NADP(+). Y210 (proton donor) is an active-site residue. The active-site Lowers pKa of active site Tyr is the K214.

It belongs to the short-chain dehydrogenases/reductases (SDR) family.

It participates in secondary metabolite biosynthesis. In terms of biological role, short chain dehydrogenase; part of the gene cluster that mediates the biosynthesis of virensols and trichoxide, fungal natural products that contain or are derived from a salicylaldehyde core. The pathway begins with the synthesis of the reduced chain in virensol C by the highly reducing polyketide synthase virA via condensation of one acetate and 8 malonate units. VirA has interesting programming rules since the first 2 ketides are fully reduced, the 3 following ketides undergo beta-dehydration, and the last 3 ketides are only reduced to beta-hydroxys to yield the trihydroxy portion. The production of aldehyde virensol C by virA alone is surprising, since virA does not contain a reductase (R) domain that is typically associated with reductive product release in HRPKS. The cupin-domain enzyme virC is involved in enhancing virA product turnover. The short-chain dehydrogenase virB then oxidizes the C-7 alcohol of virensol C to a ketone, yielding virensol D. Virensol D is further transformed to salicylaldehyde 5-deoxyaurocitrin by the short-chain dehydrogenase virD. VirD catalyzes the dehydrogenation of C-3 to form the beta-ketone aldehyde, which is followed by the generation of the nucleophilic C-2 that is required for the intramolecular aldol condensation between C-2 and C-7, itself followed by dehydration and aromatization which leads to salicylaldehyde 5-deoxyaurocitrin. While the dehydrogenation of virensol D is definitely catalyzed by virD, the aldol condensation and dehydration may be uncatalyzed or assisted by virD. The short chain dehydrogenase virG then converts salicylaldehyde 5-deoxyaurocitrin into virensol B which is further hydroxylated by the cytochrome P450 monooxygenase virE to yield the hydroquinone virensol A. VirI then may oxidize virensol A to form the quinone, while virH performs the epoxidation. Finally, the two remaining short-chain dehydrogenases, virK and virL, are probably responsible for reducing the ketones to the corresponding alcohols to furnish the epoxycyclohexanol structure in trichoxide. This chain is Short chain dehydrogenase virL, found in Hypocrea virens (strain Gv29-8 / FGSC 10586) (Gliocladium virens).